We begin with the raw amino-acid sequence, 332 residues long: 2,3-diketo-L-gulonate reductase (332 aa).

Catalysis depends on His44, which acts as the Proton donor. Residues 168–174, 224–225, and 304–306 contribute to the NAD(+) site; these read ITMVDMS, WK, and GHE.

The protein belongs to the LDH2/MDH2 oxidoreductase family. DlgD subfamily. Homodimer.

The protein resides in the cytoplasm. It catalyses the reaction 3-dehydro-L-gulonate + NAD(+) = 2,3-dioxo-L-gulonate + NADH + H(+). It carries out the reaction 3-dehydro-L-gulonate + NADP(+) = 2,3-dioxo-L-gulonate + NADPH + H(+). Its function is as follows. Catalyzes the reduction of 2,3-diketo-L-gulonate in the presence of NADH, to form 3-keto-L-gulonate. The sequence is that of 2,3-diketo-L-gulonate reductase from Shigella boydii serotype 4 (strain Sb227).